Consider the following 105-residue polypeptide: UPF0145 protein Aflv_1588 (105 aa).

It belongs to the UPF0145 family.

This chain is UPF0145 protein Aflv_1588, found in Anoxybacillus flavithermus (strain DSM 21510 / WK1).